We begin with the raw amino-acid sequence, 245 residues long: Ribosomal protein L11 methyltransferase (245 aa).

4 residues coordinate S-adenosyl-L-methionine: T101, G122, D144, and N184.

Belongs to the methyltransferase superfamily. PrmA family.

It localises to the cytoplasm. The catalysed reaction is L-lysyl-[protein] + 3 S-adenosyl-L-methionine = N(6),N(6),N(6)-trimethyl-L-lysyl-[protein] + 3 S-adenosyl-L-homocysteine + 3 H(+). Functionally, methylates ribosomal protein L11. The protein is Ribosomal protein L11 methyltransferase of Aquifex aeolicus (strain VF5).